We begin with the raw amino-acid sequence, 520 residues long: Cyclic AMP-responsive element-binding protein 3-like protein 2 (520 aa).

Residues methionine 1–cysteine 379 lie on the Cytoplasmic side of the membrane. Serine 93 carries the post-translational modification Phosphoserine. Lysine 178 participates in a covalent cross-link: Glycyl lysine isopeptide (Lys-Gly) (interchain with G-Cter in SUMO2). Serine 191 is subject to Phosphoserine. The disordered stretch occupies residues alanine 195–leucine 264. Low complexity-rich tracts occupy residues serine 208 to proline 220 and serine 234 to proline 255. Positions alanine 294–leucine 357 constitute a bZIP domain. The interval lysine 296–lysine 325 is basic motif. The tract at residues leucine 336–leucine 357 is leucine-zipper. A helical; Signal-anchor for type II membrane protein membrane pass occupies residues leucine 380–proline 400. Over tyrosine 401 to phenylalanine 520 the chain is Lumenal. The S1P recognition signature appears at arginine 427–leucine 430. 3 N-linked (GlcNAc...) asparagine glycosylation sites follow: asparagine 480, asparagine 504, and asparagine 517.

It belongs to the bZIP family. ATF subfamily. In terms of assembly, binds DNA as a dimer. Post-translationally, upon ER stress, translocated to the Golgi apparatus, where it is processed by regulated intramembrane proteolysis (RIP) to release the cytosol-facing N-terminal transcription factor domain. The cleavage is performed sequentially by site-1 and site-2 proteases (S1P/MBTPS1 and S2P/MBTPS2). N-glycosylated. In terms of processing, ubiquitinated by HRD1/SYVN1; undergoes 'Lys-48'-linked ubiquitination, followed by rapid proteasomal degradation under normal conditions. Upon ER stress, SYVN1 E3 ubiquitin-protein ligase dissociates from its substrate, ubiquitination does not occur and CREB3L2 is stabilized. As to expression, widely expressed with highest levels in placenta, lung, spleen and intestine, and lowest levels in heart, brain, skeletal muscle, thymus, colon and leukocytes. In fetal tissues, the weakest expression is detected in brain and heart.

The protein resides in the endoplasmic reticulum membrane. The protein localises to the nucleus. Its function is as follows. Transcription factor involved in unfolded protein response (UPR). In the absence of endoplasmic reticulum (ER) stress, inserted into ER membranes, with N-terminal DNA-binding and transcription activation domains oriented toward the cytosolic face of the membrane. In response to ER stress, transported to the Golgi, where it is cleaved in a site-specific manner by resident proteases S1P/MBTPS1 and S2P/MBTPS2. The released N-terminal cytosolic domain is translocated to the nucleus to effect transcription of specific target genes. Plays a critical role in chondrogenesis by activating the transcription of SEC23A, which promotes the transport and secretion of cartilage matrix proteins, and possibly that of ER biogenesis-related genes. In a neuroblastoma cell line, protects cells from ER stress-induced death. In vitro activates transcription of target genes via direct binding to the CRE site. The polypeptide is Cyclic AMP-responsive element-binding protein 3-like protein 2 (CREB3L2) (Homo sapiens (Human)).